The chain runs to 454 residues: tRNA modification GTPase MnmE (454 aa).

(6S)-5-formyl-5,6,7,8-tetrahydrofolate contacts are provided by R23, E80, and K120. A TrmE-type G domain is found at 216–377; the sequence is GMKVVIAGRP…LRNHLKQSMG (162 aa). N226 is a K(+) binding site. GTP-binding positions include 226–231, 245–251, 270–273, 335–338, and 358–360; these read NAGKSS, TDIAGTT, DTAG, NKAD, and SAR. S230 contacts Mg(2+). 3 residues coordinate K(+): T245, I247, and T250. T251 serves as a coordination point for Mg(2+). Residue K454 participates in (6S)-5-formyl-5,6,7,8-tetrahydrofolate binding.

Belongs to the TRAFAC class TrmE-Era-EngA-EngB-Septin-like GTPase superfamily. TrmE GTPase family. As to quaternary structure, homodimer. Heterotetramer of two MnmE and two MnmG subunits. K(+) is required as a cofactor.

Its subcellular location is the cytoplasm. In terms of biological role, exhibits a very high intrinsic GTPase hydrolysis rate. Involved in the addition of a carboxymethylaminomethyl (cmnm) group at the wobble position (U34) of certain tRNAs, forming tRNA-cmnm(5)s(2)U34. In Salmonella typhi, this protein is tRNA modification GTPase MnmE.